We begin with the raw amino-acid sequence, 192 residues long: Orotate phosphoribosyltransferase (192 aa).

116–124 (EDVVTTGKS) contacts 5-phospho-alpha-D-ribose 1-diphosphate. Orotate is bound by residues Thr-120 and Arg-148.

The protein belongs to the purine/pyrimidine phosphoribosyltransferase family. PyrE subfamily. Homodimer. The cofactor is Mg(2+).

The enzyme catalyses orotidine 5'-phosphate + diphosphate = orotate + 5-phospho-alpha-D-ribose 1-diphosphate. It participates in pyrimidine metabolism; UMP biosynthesis via de novo pathway; UMP from orotate: step 1/2. In terms of biological role, catalyzes the transfer of a ribosyl phosphate group from 5-phosphoribose 1-diphosphate to orotate, leading to the formation of orotidine monophosphate (OMP). The protein is Orotate phosphoribosyltransferase of Clostridium perfringens (strain ATCC 13124 / DSM 756 / JCM 1290 / NCIMB 6125 / NCTC 8237 / Type A).